We begin with the raw amino-acid sequence, 128 residues long: Protein Wnt-10 (128 aa).

5 disulfide bridges follow: cysteine 3–cysteine 17, cysteine 5–cysteine 12, cysteine 74–cysteine 105, cysteine 90–cysteine 100, and cysteine 127–cysteine 128. Serine 9 carries O-palmitoleoyl serine; by PORCN lipidation. Asparagine 91 carries N-linked (GlcNAc...) asparagine glycosylation.

This sequence belongs to the Wnt family. In terms of processing, palmitoleoylation is required for efficient binding to frizzled receptors. Depalmitoleoylation leads to Wnt signaling pathway inhibition. In embryo, in dorsal hindbrain; in adults, in brain.

It is found in the secreted. The protein localises to the extracellular space. Its subcellular location is the extracellular matrix. Its function is as follows. Ligand for members of the frizzled family of seven transmembrane receptors. Probable developmental protein. May be a signaling molecule which affects the development of discrete regions of tissues. Is likely to signal over only few cell diameters. The protein is Protein Wnt-10 (wnt10) of Xenopus laevis (African clawed frog).